A 534-amino-acid chain; its full sequence is Inorganic phosphate transporter 1-4 (534 aa).

Over 1 to 24 the chain is Cytoplasmic; the sequence is MAREQLQVLNALDVAKTQWYHFTA. A helical transmembrane segment spans residues 25 to 45; it reads IIIAGMGFFTDAYDLFCISLV. Residues 46-70 are Extracellular-facing; the sequence is TKLLGRIYYHVEGAQKPGTLPPNVA. Residues 71 to 91 traverse the membrane as a helical segment; that stretch reads AAVNGVAFCGTLAGQLFFGWL. At 92–99 the chain is on the cytoplasmic side; sequence GDKLGRKK. The helical transmembrane segment at 100-120 threads the bilayer; the sequence is VYGMTLMVMVLCSIASGLSFG. The Extracellular portion of the chain corresponds to 121 to 131; that stretch reads HEPKAVMATLC. Residues 132–152 traverse the membrane as a helical segment; it reads FFRFWLGFGIGGDYPLSATIM. Residues 153-161 lie on the Cytoplasmic side of the membrane; it reads SEYANKKTR. Residues 162 to 182 traverse the membrane as a helical segment; it reads GAFVSAVFAMQGFGIMAGGIF. Residues 183–211 lie on the Extracellular side of the membrane; that stretch reads AIIISSAFEAKFPSPAYADDALGSTIPQA. A helical transmembrane segment spans residues 212 to 232; sequence DLVWRIILMAGAIPAAMTYYS. The Cytoplasmic segment spans residues 233–293; the sequence is RSKMPETARY…GLFSKEFMSR (61 aa). Residues 294 to 314 form a helical membrane-spanning segment; sequence HGLHLLGTTSTWFLLDIAFYS. Topologically, residues 315–349 are extracellular; sequence QNLFQKDIFSAIGWIPPAQSMNAIQEVFKIARAQT. The chain crosses the membrane as a helical span at residues 350-370; sequence LIALCSTVPGYWFTVAFIDVI. Over 371–372 the chain is Cytoplasmic; that stretch reads GR. A helical transmembrane segment spans residues 373 to 393; that stretch reads FAIQMMGFFFMTVFMFALAIP. At 394–403 the chain is on the extracellular side; it reads YNHWTHKENR. Residues 404–424 traverse the membrane as a helical segment; sequence IGFVIMYSLTFFFANFGPNAT. The Cytoplasmic segment spans residues 425–442; it reads TFVVPAEIFPARFRSTCH. A helical membrane pass occupies residues 443 to 463; sequence GISAASGKLGAMVGAFGFLYL. The Extracellular segment spans residues 464–484; the sequence is AQNPDKDKTDAGYPPGIGVRN. Residues 485-505 traverse the membrane as a helical segment; it reads SLIVLGVVNFLGILFTFLVPE. At 506-534 the chain is on the cytoplasmic side; that stretch reads SKGKSLEEMSGENEDNENSNNDSRTVPIV. The interval 512-534 is disordered; that stretch reads EEMSGENEDNENSNNDSRTVPIV. 2 positions are modified to phosphoserine: Ser524 and Ser528.

It belongs to the major facilitator superfamily. Phosphate:H(+) symporter (TC 2.A.1.9) family. Interacts with NLA. Post-translationally, ubiquitinated by NLA. Ubiquitination of PHT1-4 leads to its degradation by the proteasome. In terms of tissue distribution, mostly expressed in roots, in tissues connecting the lateral roots to the primary root. Also present in flowers, in senescing anther filaments and in the abscission zone at the base of siliques. Expressed in hydathodes and axillary buds, and in some senescing leaves. After Pi starvation, localized in all cells of undifferentiated root segments, including root tips and root hairs, and in the epidermis, cortex and stellar regions of mature root segments.

Its subcellular location is the cell membrane. Its function is as follows. High-affinity transporter for external inorganic phosphate. Acts as a H(+):phosphate symporter in both low- and high-Pi conditions. Confers sensitivity to arsenate. The protein is Inorganic phosphate transporter 1-4 (PHT1-4) of Arabidopsis thaliana (Mouse-ear cress).